Reading from the N-terminus, the 154-residue chain is Myoglobin (154 aa).

The Globin domain maps to 2 to 148 (GLSDGEWQLV…FRNDIAAKYK (147 aa)). The residue at position 4 (Ser-4) is a Phosphoserine. His-65 contacts nitrite. His-65 contacts O2. Thr-68 bears the Phosphothreonine mark. Position 94 (His-94) interacts with heme b.

It belongs to the globin family. As to quaternary structure, monomeric.

The protein resides in the cytoplasm. The protein localises to the sarcoplasm. It carries out the reaction Fe(III)-heme b-[protein] + nitric oxide + H2O = Fe(II)-heme b-[protein] + nitrite + 2 H(+). The catalysed reaction is H2O2 + AH2 = A + 2 H2O. In terms of biological role, monomeric heme protein which primary function is to store oxygen and facilitate its diffusion within muscle tissues. Reversibly binds oxygen through a pentacoordinated heme iron and enables its timely and efficient release as needed during periods of heightened demand. Depending on the oxidative conditions of tissues and cells, and in addition to its ability to bind oxygen, it also has a nitrite reductase activity whereby it regulates the production of bioactive nitric oxide. Under stress conditions, like hypoxia and anoxia, it also protects cells against reactive oxygen species thanks to its pseudoperoxidase activity. The protein is Myoglobin (MB) of Vulpes chama (Cape fox).